The sequence spans 549 residues: Oxygen-dependent choline dehydrogenase (549 aa).

4–33 (DFVIIGSGSAGSAMAYRLSEDGRYSVIVIE) is an FAD binding site. Residue histidine 465 is the Proton acceptor of the active site.

Belongs to the GMC oxidoreductase family. It depends on FAD as a cofactor.

The enzyme catalyses choline + A = betaine aldehyde + AH2. It catalyses the reaction betaine aldehyde + NAD(+) + H2O = glycine betaine + NADH + 2 H(+). It functions in the pathway amine and polyamine biosynthesis; betaine biosynthesis via choline pathway; betaine aldehyde from choline (cytochrome c reductase route): step 1/1. Functionally, involved in the biosynthesis of the osmoprotectant glycine betaine. Catalyzes the oxidation of choline to betaine aldehyde and betaine aldehyde to glycine betaine at the same rate. This chain is Oxygen-dependent choline dehydrogenase, found in Brucella ovis (strain ATCC 25840 / 63/290 / NCTC 10512).